Here is a 396-residue protein sequence, read N- to C-terminus: S-adenosylmethionine synthase (396 aa).

E11 contributes to the Mg(2+) binding site. H17 contributes to the ATP binding site. E45 is a K(+) binding site. The L-methionine site is built by E58 and Q101. ATP contacts are provided by residues 169 to 171 (DGK), 237 to 240 (SGRF), D248, 254 to 255 (RK), A271, K275, and K279. D248 provides a ligand contact to L-methionine. K279 contacts L-methionine.

It belongs to the AdoMet synthase family. In terms of assembly, homotetramer. Requires Mn(2+) as cofactor. Mg(2+) is required as a cofactor. It depends on Co(2+) as a cofactor. The cofactor is K(+).

It localises to the cytoplasm. The catalysed reaction is L-methionine + ATP + H2O = S-adenosyl-L-methionine + phosphate + diphosphate. The protein operates within amino-acid biosynthesis; S-adenosyl-L-methionine biosynthesis; S-adenosyl-L-methionine from L-methionine: step 1/1. In terms of biological role, catalyzes the formation of S-adenosylmethionine from methionine and ATP. The reaction comprises two steps that are both catalyzed by the same enzyme: formation of S-adenosylmethionine (AdoMet) and triphosphate, and subsequent hydrolysis of the triphosphate. This is S-adenosylmethionine synthase (SAMS) from Medicago sativa subsp. falcata (Sickle medic).